The primary structure comprises 78 residues: Putative membrane protein insertion efficiency factor (78 aa).

Belongs to the UPF0161 family.

The protein resides in the cell membrane. Functionally, could be involved in insertion of integral membrane proteins into the membrane. The chain is Putative membrane protein insertion efficiency factor from Bacillus anthracis (strain A0248).